Reading from the N-terminus, the 102-residue chain is Protein transport protein sec61 subunit beta (102 aa).

The segment covering 1 to 15 (MSSTKASGSVKNSAA) has biased composition (polar residues). The disordered stretch occupies residues 1–53 (MSSTKASGSVKNSAASAPGGPKSQIRRRAAVEKNTKESNSGPAGARAAGAPGS). Residues 1–72 (MSSTKASGSV…DEASGFKVDP (72 aa)) are Cytoplasmic-facing. Positions 41–52 (GPAGARAAGAPG) are enriched in low complexity. Residues 73-93 (VVVMVLSVGFIASVFLLHIVA) form a helical membrane-spanning segment.

This sequence belongs to the SEC61-beta family. Heterotrimeric complex composed of SEC61, SBH1 and SSS1.

It localises to the endoplasmic reticulum membrane. Necessary for protein translocation in the endoplasmic reticulum. The polypeptide is Protein transport protein sec61 subunit beta (sbh1) (Schizosaccharomyces pombe (strain 972 / ATCC 24843) (Fission yeast)).